The primary structure comprises 198 residues: Uracil phosphoribosyltransferase homolog (198 aa).

Belongs to the UPRTase family.

The protein resides in the plastid. The protein localises to the chloroplast. The protein is Uracil phosphoribosyltransferase homolog of Pyropia yezoensis (Susabi-nori).